We begin with the raw amino-acid sequence, 257 residues long: UPF0246 protein Sama_0917 (257 aa).

The protein belongs to the UPF0246 family.

This is UPF0246 protein Sama_0917 from Shewanella amazonensis (strain ATCC BAA-1098 / SB2B).